Reading from the N-terminus, the 282-residue chain is Bifunctional protein FolD (282 aa).

Residues Gly-164 to Ser-166, Ile-189, and Ile-230 contribute to the NADP(+) site.

Belongs to the tetrahydrofolate dehydrogenase/cyclohydrolase family. In terms of assembly, homodimer.

It carries out the reaction (6R)-5,10-methylene-5,6,7,8-tetrahydrofolate + NADP(+) = (6R)-5,10-methenyltetrahydrofolate + NADPH. The catalysed reaction is (6R)-5,10-methenyltetrahydrofolate + H2O = (6R)-10-formyltetrahydrofolate + H(+). It functions in the pathway one-carbon metabolism; tetrahydrofolate interconversion. Functionally, catalyzes the oxidation of 5,10-methylenetetrahydrofolate to 5,10-methenyltetrahydrofolate and then the hydrolysis of 5,10-methenyltetrahydrofolate to 10-formyltetrahydrofolate. The polypeptide is Bifunctional protein FolD (Campylobacter jejuni subsp. doylei (strain ATCC BAA-1458 / RM4099 / 269.97)).